A 219-amino-acid polypeptide reads, in one-letter code: Small ribosomal subunit protein uS3c (219 aa).

The region spanning 39–118 is the KH type-2 domain; sequence IRSFIRKYIQ…RLNIVITKVE (80 aa).

The protein belongs to the universal ribosomal protein uS3 family. In terms of assembly, part of the 30S ribosomal subunit.

It is found in the plastid. This chain is Small ribosomal subunit protein uS3c (rps3), found in Cuscuta obtusiflora (Peruvian dodder).